The following is a 214-amino-acid chain: Protein get-1 (214 aa).

At 1–4 the chain is on the lumenal side; the sequence is MPSL. A helical transmembrane segment spans residues 5–24; that stretch reads LVVIFVIELFVQLVNTIGAA. The Cytoplasmic portion of the chain corresponds to 25 to 110; sequence TINNLLWRIA…KFDRTLTTVR (86 aa). Positions 73 to 107 form a coiled coil; it reads KWARLRRQHDKLLEDLEKRKKELDAAKTKFDRTLT. Residues 111-131 form a helical membrane-spanning segment; that stretch reads VVATRGLQWFLPFWYSREPMF. Residues 132-155 are Lumenal-facing; that stretch reads WLPYGWFPYYVEWFASFPRAPLGS. Residues 156–172 traverse the membrane as a helical segment; sequence VSIVVWQWACTGVIKLV. Over 173–214 the chain is Cytoplasmic; the sequence is IETVMAVVGLIVAARQKQQEKQKAKQAVPAAGGGDSKAEEAK. Positions 190-214 are disordered; that stretch reads QQEKQKAKQAVPAAGGGDSKAEEAK.

The protein belongs to the WRB/GET1 family. In terms of assembly, interacts with GET3.

Its subcellular location is the endoplasmic reticulum membrane. In terms of biological role, required for the post-translational delivery of tail-anchored (TA) proteins to the endoplasmic reticulum. Acts as a membrane receptor for soluble GET3, which recognizes and selectively binds the transmembrane domain of TA proteins in the cytosol. The sequence is that of Protein get-1 (get-1) from Neurospora crassa (strain ATCC 24698 / 74-OR23-1A / CBS 708.71 / DSM 1257 / FGSC 987).